The primary structure comprises 359 residues: Small ribosomal subunit biogenesis GTPase RsgA (359 aa).

The 159-residue stretch at 101–259 (KRKGSQAIAS…LMDNPGIREV (159 aa)) folds into the CP-type G domain. Residues 149–152 (NKKD) and 201–209 (GSSGAGKST) contribute to the GTP site. Zn(2+) is bound by residues Cys284, Cys289, His291, and Cys297. A disordered region spans residues 331–359 (DPEEARKKKQKDKQMSKALQKRLKDKGRK). Over residues 349–359 (LQKRLKDKGRK) the composition is skewed to basic residues.

This sequence belongs to the TRAFAC class YlqF/YawG GTPase family. RsgA subfamily. Monomer. Associates with 30S ribosomal subunit, binds 16S rRNA. Requires Zn(2+) as cofactor.

The protein localises to the cytoplasm. Functionally, one of several proteins that assist in the late maturation steps of the functional core of the 30S ribosomal subunit. Helps release RbfA from mature subunits. May play a role in the assembly of ribosomal proteins into the subunit. Circularly permuted GTPase that catalyzes slow GTP hydrolysis, GTPase activity is stimulated by the 30S ribosomal subunit. The polypeptide is Small ribosomal subunit biogenesis GTPase RsgA (Leptospira interrogans serogroup Icterohaemorrhagiae serovar copenhageni (strain Fiocruz L1-130)).